Here is a 62-residue protein sequence, read N- to C-terminus: Metallothionein (62 aa).

Residue Met-1 is modified to N-acetylmethionine. The tract at residues Met-1–Cys-30 is beta. A divalent metal cation is bound by residues Cys-6, Cys-8, Cys-14, Cys-16, Cys-20, Cys-22, Cys-25, Cys-27, Cys-30, Cys-34, Cys-35, Cys-37, Cys-38, Cys-42, Cys-45, Cys-49, Cys-51, Cys-58, Cys-60, and Cys-61. An alpha region spans residues Lys-31–Asn-62.

It belongs to the metallothionein superfamily. Type 1 family.

Its function is as follows. Metallothioneins have a high content of cysteine residues that bind various heavy metals. This is Metallothionein (mt-a) from Xenopus laevis (African clawed frog).